A 316-amino-acid polypeptide reads, in one-letter code: Acetyl-coenzyme A carboxylase carboxyl transferase subunit alpha (316 aa).

In terms of domain architecture, CoA carboxyltransferase C-terminal spans 40-293 (LERRSKDALR…GETIENGFRE (254 aa)).

It belongs to the AccA family. Acetyl-CoA carboxylase is a heterohexamer composed of biotin carboxyl carrier protein (AccB), biotin carboxylase (AccC) and two subunits each of ACCase subunit alpha (AccA) and ACCase subunit beta (AccD).

Its subcellular location is the cytoplasm. It catalyses the reaction N(6)-carboxybiotinyl-L-lysyl-[protein] + acetyl-CoA = N(6)-biotinyl-L-lysyl-[protein] + malonyl-CoA. The protein operates within lipid metabolism; malonyl-CoA biosynthesis; malonyl-CoA from acetyl-CoA: step 1/1. Component of the acetyl coenzyme A carboxylase (ACC) complex. First, biotin carboxylase catalyzes the carboxylation of biotin on its carrier protein (BCCP) and then the CO(2) group is transferred by the carboxyltransferase to acetyl-CoA to form malonyl-CoA. In Chelativorans sp. (strain BNC1), this protein is Acetyl-coenzyme A carboxylase carboxyl transferase subunit alpha.